Reading from the N-terminus, the 241-residue chain is Aquaporin Z 1 (241 aa).

The chain crosses the membrane as a helical span at residues 23 to 43 (AVFAAAFPELGIGFLGVAFAF). The NPA 1 signature appears at 63 to 65 (NPA). A run of 3 helical transmembrane segments spans residues 85 to 105 (IVAQ…ILTG), 129 to 149 (LLSA…VILG), and 156 to 176 (PVGF…LISI). The short motif at 184-186 (NPA) is the NPA 2 element. Residues 204–224 (WLFWLAPILGGAIGAVVWKIF) form a helical membrane-spanning segment.

The protein belongs to the MIP/aquaporin (TC 1.A.8) family. Homotetramer.

The protein resides in the cell inner membrane. It catalyses the reaction H2O(in) = H2O(out). Functionally, channel that permits osmotically driven movement of water in both directions. It is involved in the osmoregulation and in the maintenance of cell turgor during volume expansion in rapidly growing cells. It mediates rapid entry or exit of water in response to abrupt changes in osmolarity. This is Aquaporin Z 1 from Agrobacterium fabrum (strain C58 / ATCC 33970) (Agrobacterium tumefaciens (strain C58)).